The following is a 334-amino-acid chain: Zinc-finger homeodomain protein 10 (334 aa).

A compositionally biased stretch (low complexity) spans 1–15 (MMDMTPTITTTTTPT). Disordered regions lie at residues 1–33 (MMDM…QPAK) and 103–164 (FHRR…LLSL). The segment at 56 to 107 (YKECLKNHAAALGGHALDGCGEFMPSPSSISSDPTSLKCAACGCHRNFHRRD) adopts a ZF-HD dimerization-type; degenerate zinc-finger fold. A compositionally biased stretch (pro residues) spans 136–155 (PPPPPPPPPRSPNSASPPPI). Positions 200–263 (RKRFRTKFSQ…NNKNTFNRRD (64 aa)) form a DNA-binding region, homeobox. The interval 292–334 (NGHHGVGGGGELHQSVSSGGGGGGFDSDSGGANGGNVNGSSSS) is disordered. The span at 309–328 (SGGGGGGFDSDSGGANGGNV) shows a compositional bias: gly residues.

Homo- and heterodimer with other ZFHD proteins. Interacts with MIF1, MIF2 and MIF3; these interactions prevent nuclear localization and DNA-binding to inhibit transcription regulation activity. Binds to ZHD1, ZHD2, ZHD4, ZHD5, ZHD6, ZHD7 and ZHD8. Interacts with KIN10 and KIN11. As to expression, mostly expressed in rosettes (e.g. young leaves), flowers (e.g. styles), siliques and inflorescence.

The protein localises to the nucleus. Putative transcription factor. Probably involved in establishing polarity during leaf development through the gibberellic acid (GA) signaling pathway. The protein is Zinc-finger homeodomain protein 10 (ZHD10) of Arabidopsis thaliana (Mouse-ear cress).